Consider the following 1001-residue polypeptide: Phosphatidylinositol 4,5-bisphosphate 5-phosphatase A (1001 aa).

A compositionally biased stretch (polar residues) spans 1–12; it reads MEGQSRSGSAKS. Disordered stretches follow at residues 1–130 and 144–412; these read MEGQ…VASV and SASA…QPTC. The RSXSXX motif 1 signature appears at 6-11; that stretch reads RSGSAK. A compositionally biased stretch (low complexity) spans 13-28; it reads GTRTGLGPLPGTHGAL. The span at 29–42 shows a compositional bias: polar residues; it reads QTGTPSKKVNSSFQ. R56 carries the asymmetric dimethylarginine; alternate modification. At R56 the chain carries Omega-N-methylarginine; alternate. R65 is subject to Omega-N-methylarginine. R76 is subject to Asymmetric dimethylarginine. R83 carries the post-translational modification Asymmetric dimethylarginine; alternate. Residue R83 is modified to Omega-N-methylarginine; alternate. Positions 161 to 174 are enriched in polar residues; that stretch reads SPTSRDQKQLSPTS. S171 carries the post-translational modification Phosphoserine. The span at 180–196 shows a compositional bias: low complexity; it reads ALATSGLSLALASQEQP. Positions 197-210 are enriched in pro residues; it reads PQSPSSPSPVPSPV. Residues 284–294 are compositionally biased toward basic and acidic residues; the sequence is ARPEAPRHSPE. 2 positions are modified to phosphoserine: S292 and S325. Over residues 338-348 the composition is skewed to pro residues; sequence VPPPLPKPPRS. Residues 346-351 carry the SH3-binding motif; that stretch reads PRSPSR. 2 stretches are compositionally biased toward low complexity: residues 349–361 and 394–411; these read PSRS…NRSP and SPVA…AQPT. The RSXSXX motif 2 signature appears at 351–356; sequence RSPSRS. The catalytic stretch occupies residues 420–723; the sequence is ITVVTWNVGT…SDHKPVAARF (304 aa). Residues 724-835 are required for ruffle localization; it reads LLQFAFRDDV…IGVTEPFQIS (112 aa). Positions 837 to 1001 are disordered; sequence PTSESASSST…LGLEDGGLGP (165 aa). A compositionally biased stretch (low complexity) spans 838 to 853; that stretch reads TSESASSSTDSSGTSS. 2 consecutive short sequence motifs (RSXSXX motif) follow at residues 869–874 and 880–885; these read RSPSPG and RSRSPG. Residue S898 is modified to Phosphoserine. Composition is skewed to low complexity over residues 905-917 and 925-936; these read SRSP…QLPR and SSGSRGSSEEGP. Positions 906–911 match the RSXSXX motif 5 motif; that stretch reads RSPSPQ. A compositionally biased stretch (pro residues) spans 937-949; the sequence is SGPPGPWAFPPAV. The residue at position 985 (S985) is a Phosphoserine.

The protein belongs to the inositol 1,4,5-trisphosphate 5-phosphatase type II family. Post-translationally, phosphorylated on Ser/Thr residues. In terms of tissue distribution, expressed in heart, brain, kidney, stomach, small intestine and lung. Not expressed in spleen, thymus, skeletal muscle, testis and skin.

The protein localises to the cytoplasm. The catalysed reaction is 1D-myo-inositol 1,4,5-trisphosphate + H2O = 1D-myo-inositol 1,4-bisphosphate + phosphate. The enzyme catalyses 1D-myo-inositol 1,3,4,5-tetrakisphosphate + H2O = 1D-myo-inositol 1,3,4-trisphosphate + phosphate. It carries out the reaction a 1,2-diacyl-sn-glycero-3-phospho-(1D-myo-inositol-4,5-bisphosphate) + H2O = a 1,2-diacyl-sn-glycero-3-phospho-(1D-myo-inositol 4-phosphate) + phosphate. Functionally, inositol 5-phosphatase, which converts inositol 1,4,5-trisphosphate to inositol 1,4-bisphosphate. Also converts phosphatidylinositol 4,5-bisphosphate to phosphatidylinositol 4-phosphate and inositol 1,3,4,5-tetrakisphosphate to inositol 1,3,4-trisphosphate in vitro. May be involved in modulation of the function of inositol and phosphatidylinositol polyphosphate-binding proteins that are present at membranes ruffles. The sequence is that of Phosphatidylinositol 4,5-bisphosphate 5-phosphatase A (Inpp5j) from Rattus norvegicus (Rat).